The sequence spans 472 residues: Eukaryotic translation initiation factor 2 subunit 3B (472 aa).

Residue A2 is modified to N-acetylalanine. The residue at position 16 (S16) is a Phosphoserine. The tr-type G domain occupies 39 to 248 (QATINIGTIG…IVKKIPVPPR (210 aa)). Residues 48-55 (GHVAHGKS) are G1. GTP is bound at residue 51-56 (AHGKST). The segment at 76-80 (NITIK) is G2. The G3 stretch occupies residues 134-137 (DCPG). GTP contacts are provided by residues 190–193 (NKID) and 225–227 (SAQ). The G4 stretch occupies residues 190 to 193 (NKID). The interval 225–227 (SAQ) is G5.

It belongs to the TRAFAC class translation factor GTPase superfamily. Classic translation factor GTPase family. EIF2G subfamily. As to quaternary structure, eIF2 is a heterotrimer composed of an alpha, a beta and a gamma chain. eIF2 is member of the 43S pre-initiation complex (43S PIC). As to expression, specifically expressed in testis at the mRNA level.

It catalyses the reaction GTP + H2O = GDP + phosphate + H(+). Member of the eIF2 complex that functions in the early steps of protein synthesis by forming a ternary complex with GTP and initiator tRNA. This complex binds to a 40S ribosomal subunit, followed by mRNA binding to form the 43S pre-initiation complex (43S PIC). Junction of the 60S ribosomal subunit to form the 80S initiation complex is preceded by hydrolysis of the GTP bound to eIF2 and release of an eIF2-GDP binary complex. In order for eIF2 to recycle and catalyze another round of initiation, the GDP bound to eIF2 must exchange with GTP by way of a reaction catalyzed by eIF-2B. In Homo sapiens (Human), this protein is Eukaryotic translation initiation factor 2 subunit 3B.